We begin with the raw amino-acid sequence, 719 residues long: Solute carrier organic anion transporter family member 6A1 (719 aa).

The interval 1–46 (MFVGVARHSGSQDEVSRGVEPLEAARAQPAKDRRAKGTPKSSKPGK) is disordered. Residues 1-106 (MFVGVARHSG…TCCECCNNIR (106 aa)) are Cytoplasmic-facing. Residues 33 to 46 (RRAKGTPKSSKPGK) show a composition bias toward basic residues. Residues 107-126 (CFMIFYCILLICQGVVFGLI) traverse the membrane as a helical segment. The Extracellular segment spans residues 127 to 145 (DVSIGDFQKEYQLKTIEKL). The chain crosses the membrane as a helical span at residues 146–166 (ALEKSYDISSGLVAIFIAFYG). The Cytoplasmic portion of the chain corresponds to 167–171 (DRKKV). The chain crosses the membrane as a helical span at residues 172 to 196 (IWFVASSFLIGLGSLLCAFPSINEE). The Extracellular segment spans residues 197 to 223 (NKQSKVGIEDICEEIKVVSGCQSSGIS). A helical transmembrane segment spans residues 224–254 (FQSKYLSFFILGQTVQGIAGMPLYILGITFI). At 255-274 (DENVATHSAGIYLGIAECTS) the chain is on the cytoplasmic side. Residues 275-295 (MIGYALGYVLGAPLVKVPENT) traverse the membrane as a helical segment. The Extracellular portion of the chain corresponds to 296–311 (TSATNTTVNNGSPEWL). N-linked (GlcNAc...) asparagine glycosylation occurs at Asn-300. Residues 312–336 (WTWWINFLFAAVVAWCTLIPLSCFP) traverse the membrane as a helical segment. Over 337 to 378 (NNMPGSTRIKARKRKQLHFFDSRLKDLKLGTNIKDLCAALWI) the chain is Cytoplasmic. The helical transmembrane segment at 379–400 (LMKNPVLICLALSKATEYLVII) threads the bilayer. Topologically, residues 401 to 420 (GASEFLPIYLENQFILTPTV) are extracellular. A helical membrane pass occupies residues 421–444 (ATTLAGLVLIPGGALGQLLGGVIV). Topologically, residues 445–448 (STLE) are cytoplasmic. Residues 449–472 (MSCKALMRFIMVTSVISLILLVFI) traverse the membrane as a helical segment. Residues 473-581 (IFVRCNPVQF…DAKCYKLPLF (109 aa)) lie on the Extracellular side of the membrane. One can recognise a Kazal-like domain in the interval 496–551 (GNLTAPCNEKCRCSSSIYSSICGRDDIEYFSPCFAGCTYSKAQNQKKMYYNCSCIK). Asn-497 carries an N-linked (GlcNAc...) asparagine glycan. 3 disulfide bridges follow: Cys-502/Cys-532, Cys-508/Cys-528, and Cys-517/Cys-549. The N-linked (GlcNAc...) asparagine glycan is linked to Asn-546. Residues 582–604 (IAFIFSTLIFSGFSGVPIVLAMT) form a helical membrane-spanning segment. Residues 605 to 613 (RVVPDKLRS) lie on the Cytoplasmic side of the membrane. A helical transmembrane segment spans residues 614–639 (LALGVSYVILRIFGTIPGPSIFKMSG). Over 640–673 (ETSCILRDVNKCGHTGRCWIYNKTKMAFLLVGIC) the chain is Extracellular. An N-linked (GlcNAc...) asparagine glycan is attached at Asn-661. The helical transmembrane segment at 674–691 (FLCKLCTIIFTTIAFFIY) threads the bilayer. The Cytoplasmic portion of the chain corresponds to 692-719 (KRRLNENTDFPDVTVKNPKVKKKEETDL).

The protein belongs to the organo anion transporter (TC 2.A.60) family. Strongly expressed in testis. Weakly expressed in spleen, brain, fetal brain and placenta. Detected in lung tumors.

It localises to the cell membrane. This chain is Solute carrier organic anion transporter family member 6A1 (SLCO6A1), found in Homo sapiens (Human).